Consider the following 678-residue polypeptide: Geranylgeranyl transferase type-2 subunit alpha 1 (678 aa).

PFTA repeat units lie at residues 40-74 (YTNE…DRLA), 86-120 (ILDE…KGHS), 121-155 (SVGN…LTNR), 156-190 (SEQD…SLLA), and 201-235 (KIPE…QTLN). 5 LRR repeats span residues 510 to 532 (MNNL…VEKL), 533 to 554 (LFVQ…LEAM), 555 to 578 (QLLS…SLRH), 580 to 604 (KQLK…RYLC), and 638 to 663 (DLNL…VLQV).

It belongs to the protein prenyltransferase subunit alpha family. In terms of assembly, heterotrimer composed of the alpha subunit RGTA, the beta subunit RGTB and REP; within this trimer, RGTA and RGTB form the catalytic component, while REP mediates peptide substrate binding.

It carries out the reaction geranylgeranyl diphosphate + L-cysteinyl-[protein] = S-geranylgeranyl-L-cysteinyl-[protein] + diphosphate. The enzymatic reaction requires the aid of the Rab escort protein REP. Catalyzes the transfer of a geranylgeranyl moiety from geranylgeranyl diphosphate to both cysteines of Rab proteins with the C-terminal sequence -CCXX, CXXX, -XCCX and -XCXC, such as RABA1A, RABA2A, RABF2A and RABG2. In vitro, can prenylate PGGTI targets with the C-terminal Cys-aliphatic-aliphatic-X (CaaX) with leucine in the terminal position. Substrates with the C-terminal sequence -CSIL such as ARAC11/ROP1 or GG2/AGG2 are prenylated independently of REP and when the alpha subunit is associated with a beta subunit (RGTB1 or RGTB2). This chain is Geranylgeranyl transferase type-2 subunit alpha 1, found in Arabidopsis thaliana (Mouse-ear cress).